The sequence spans 384 residues: Cyclin-J (384 aa).

The region spanning 15–143 is the Cyclin N-terminal domain; it reads DIHQTLRYKE…LLETFEWNLC (129 aa).

It belongs to the cyclin family. Cyclin J subfamily.

The polypeptide is Cyclin-J (ccnj) (Xenopus laevis (African clawed frog)).